A 132-amino-acid polypeptide reads, in one-letter code: Small ribosomal subunit protein uS8 (132 aa).

Belongs to the universal ribosomal protein uS8 family. Part of the 30S ribosomal subunit. Contacts proteins S5 and S12.

Functionally, one of the primary rRNA binding proteins, it binds directly to 16S rRNA central domain where it helps coordinate assembly of the platform of the 30S subunit. The chain is Small ribosomal subunit protein uS8 from Psychrobacter arcticus (strain DSM 17307 / VKM B-2377 / 273-4).